Consider the following 105-residue polypeptide: MHGPKATLQDIVLHLEPQNEIPVDLLCHEQLSDSEEENDEIDGVNHQHLPARRAEPQRHTMLCMCCKCEARIKLVVESSADDLRAFQQLFLNTLSFVCPWCASQQ.

Residues 1–49 (MHGPKATLQDIVLHLEPQNEIPVDLLCHEQLSDSEEENDEIDGVNHQHL) are E7 terminal domain. An LXCXE motif; interaction with host RB1 and TMEM173/STING motif is present at residues 25–29 (LLCHE). The segment at 65–101 (CCKCEARIKLVVESSADDLRAFQQLFLNTLSFVCPWC) is a zinc-finger region. The Nuclear export signal signature appears at 83–91 (LRAFQQLFL).

This sequence belongs to the papillomaviridae E7 protein family. As to quaternary structure, homodimer. Homooligomer. Interacts with host RB1; this interaction induces dissociation of RB1-E2F1 complex thereby disrupting RB1 activity. Interacts with host EP300; this interaction represses EP300 transcriptional activity. Interacts with protein E2; this interaction inhibits E7 oncogenic activity. Interacts with host TMEM173/STING; this interaction impairs the ability of TMEM173/STING to sense cytosolic DNA and promote the production of type I interferon (IFN-alpha and IFN-beta). Post-translationally, highly phosphorylated.

Its subcellular location is the host cytoplasm. It is found in the host nucleus. In terms of biological role, plays a role in viral genome replication by driving entry of quiescent cells into the cell cycle. Stimulation of progression from G1 to S phase allows the virus to efficiently use the cellular DNA replicating machinery to achieve viral genome replication. E7 protein has both transforming and trans-activating activities. Induces the disassembly of the E2F1 transcription factor from RB1, with subsequent transcriptional activation of E2F1-regulated S-phase genes. Interferes with host histone deacetylation mediated by HDAC1 and HDAC2, leading to transcription activation. Also plays a role in the inhibition of both antiviral and antiproliferative functions of host interferon alpha. Interaction with host TMEM173/STING impairs the ability of TMEM173/STING to sense cytosolic DNA and promote the production of type I interferon (IFN-alpha and IFN-beta). This chain is Protein E7, found in Homo sapiens (Human).